The sequence spans 638 residues: LIM domain kinase 2 (638 aa).

LIM zinc-binding domains are found at residues 12-63 and 72-124; these read CPGC…CPKD and CHGC…CGKC. A PDZ domain is found at 152 to 239; the sequence is LISMPATTEG…TLQLLIEHDP (88 aa). Thr210 is modified (phosphothreonine). The interval 279–304 is disordered; the sequence is LRRRSLRRSNSISKSPGPSSPKEPLL. Residues 286–302 show a composition bias toward low complexity; the sequence is RSNSISKSPGPSSPKEP. Residues Ser293 and Ser298 each carry the phosphoserine modification. The 278-residue stretch at 331–608 folds into the Protein kinase domain; sequence LIHGEVLGKG…DSFEALSLYL (278 aa). Residues 337–345 and Lys360 each bind ATP; that span reads LGKGFFGQA. Residue Asp451 is part of the active site. At Thr505 the chain carries Phosphothreonine; by ROCK1 and CDC42BP.

The protein belongs to the protein kinase superfamily. TKL Ser/Thr protein kinase family. Interacts with LIMK2b. In terms of assembly, interacts with LIMK2a. As to quaternary structure, binds ROCK1 and MARF1. Interacts with NISCH. Phosphorylated on serine and/or threonine residues by ROCK1.

The protein resides in the cytoplasm. It localises to the cytoskeleton. The protein localises to the spindle. It is found in the microtubule organizing center. Its subcellular location is the centrosome. The protein resides in the nucleus. It localises to the perinuclear region. It carries out the reaction L-seryl-[protein] + ATP = O-phospho-L-seryl-[protein] + ADP + H(+). The catalysed reaction is L-threonyl-[protein] + ATP = O-phospho-L-threonyl-[protein] + ADP + H(+). In terms of biological role, serine/threonine-protein kinase that plays an essential role in the regulation of actin filament dynamics. Acts downstream of several Rho family GTPase signal transduction pathways. Involved in astral microtubule organization and mitotic spindle orientation during early stages of mitosis by mediating phosphorylation of TPPP. Displays serine/threonine-specific phosphorylation of myelin basic protein and histone (MBP) in vitro. Suppresses ciliogenesis via multiple pathways; phosphorylation of CFL1, suppression of directional trafficking of ciliary vesicles to the ciliary base, and by facilitating YAP1 nuclear localization where it acts as a transcriptional corepressor of the TEAD4 target genes AURKA and PLK1. The polypeptide is LIM domain kinase 2 (LIMK2) (Homo sapiens (Human)).